Consider the following 198-residue polypeptide: Recombination protein RecR (198 aa).

The segment at 58-73 (CKVCQTLTDKEICPIC) adopts a C4-type zinc-finger fold. A Toprim domain is found at 81 to 175 (KVIMVVENTR…KVSRIASGVP (95 aa)).

Belongs to the RecR family.

Its function is as follows. May play a role in DNA repair. It seems to be involved in an RecBC-independent recombinational process of DNA repair. It may act with RecF and RecO. The protein is Recombination protein RecR of Lachnoclostridium phytofermentans (strain ATCC 700394 / DSM 18823 / ISDg) (Clostridium phytofermentans).